The following is a 397-amino-acid chain: Argininosuccinate synthase (397 aa).

8 to 16 (AYSGGLDTS) provides a ligand contact to ATP. L-citrulline-binding residues include Y86 and S91. Residue G116 coordinates ATP. Residues T118, N122, and D123 each coordinate L-aspartate. Residue N122 participates in L-citrulline binding. L-citrulline contacts are provided by R126, S175, S184, E260, and Y272.

It belongs to the argininosuccinate synthase family. Type 1 subfamily. In terms of assembly, homotetramer.

The protein localises to the cytoplasm. The enzyme catalyses L-citrulline + L-aspartate + ATP = 2-(N(omega)-L-arginino)succinate + AMP + diphosphate + H(+). The protein operates within amino-acid biosynthesis; L-arginine biosynthesis; L-arginine from L-ornithine and carbamoyl phosphate: step 2/3. This chain is Argininosuccinate synthase, found in Clostridium botulinum (strain 657 / Type Ba4).